A 524-amino-acid polypeptide reads, in one-letter code: Alkaline phosphatase, tissue-nonspecific isozyme (524 aa).

Residues 1 to 17 form the signal peptide; the sequence is MISPFLVLAIGTCLTNS. Aspartate 60 provides a ligand contact to Mg(2+). Positions 60 and 110 each coordinate Zn(2+). Residue serine 110 is the Phosphoserine intermediate of the active site. At serine 110 the chain carries Phosphoserine. A disulfide bridge connects residues cysteine 139 and cysteine 201. Asparagine 140 carries an N-linked (GlcNAc...) asparagine glycan. Threonine 173 serves as a coordination point for Mg(2+). N-linked (GlcNAc...) asparagine glycosylation occurs at asparagine 230. A Ca(2+)-binding site is contributed by glutamate 235. N-linked (GlcNAc...) asparagine glycosylation occurs at asparagine 271. The Ca(2+) site is built by phenylalanine 290 and glutamate 291. N-linked (GlcNAc...) asparagine glycosylation is present at asparagine 302. Aspartate 306 contributes to the Ca(2+) binding site. Glutamate 332 is a binding site for Mg(2+). Zn(2+) is bound by residues aspartate 337, histidine 341, aspartate 378, and histidine 379. A glycan (N-linked (GlcNAc...) asparagine) is linked at asparagine 430. Histidine 454 serves as a coordination point for Zn(2+). The cysteines at positions 489 and 497 are disulfide-linked. Serine 499 is lipidated: GPI-anchor amidated serine. Positions 500-524 are cleaved as a propeptide — removed in mature form; sequence ASSAGGPSPGPLFLLLALPSLGILF.

The protein belongs to the alkaline phosphatase family. As to quaternary structure, homodimer. The cofactor is Mg(2+). It depends on Zn(2+) as a cofactor. Ca(2+) serves as cofactor. Post-translationally, N-glycosylated.

It is found in the cell membrane. The protein resides in the extracellular vesicle membrane. Its subcellular location is the mitochondrion membrane. The protein localises to the mitochondrion intermembrane space. It carries out the reaction a phosphate monoester + H2O = an alcohol + phosphate. The catalysed reaction is diphosphate + H2O = 2 phosphate + H(+). The enzyme catalyses pyridoxal 5'-phosphate + H2O = pyridoxal + phosphate. It catalyses the reaction phosphoethanolamine + H2O = ethanolamine + phosphate. It carries out the reaction N-phosphocreatine + H2O = creatine + phosphate. The catalysed reaction is ATP + H2O = ADP + phosphate + H(+). The enzyme catalyses ADP + H2O = AMP + phosphate + H(+). It catalyses the reaction AMP + H2O = adenosine + phosphate. Its activity is regulated as follows. Phosphatase activity is specifically inhibited by 5-((5-chloro-2-methoxyphenyl)sulfonamido)nicotinamide (SBI-425). In terms of biological role, alkaline phosphatase that metabolizes various phosphate compounds and plays a key role in skeletal mineralization and adaptive thermogenesis. Has broad substrate specificity and can hydrolyze a considerable variety of compounds: however, only a few substrates, such as diphosphate (inorganic pyrophosphate; PPi), pyridoxal 5'-phosphate (PLP) and N-phosphocreatine are natural substrates. Plays an essential role in skeletal and dental mineralization via its ability to hydrolyze extracellular diphosphate, a potent mineralization inhibitor, to phosphate: it thereby promotes hydroxyapatite crystal formation and increases inorganic phosphate concentration. Acts in a non-redundant manner with PHOSPHO1 in skeletal mineralization: while PHOSPHO1 mediates the initiation of hydroxyapatite crystallization in the matrix vesicles (MVs), ALPL/TNAP catalyzes the spread of hydroxyapatite crystallization in the extracellular matrix. Also promotes dephosphorylation of osteopontin (SSP1), an inhibitor of hydroxyapatite crystallization in its phosphorylated state; it is however unclear whether ALPL/TNAP mediates SSP1 dephosphorylation via a direct or indirect manner. Catalyzes dephosphorylation of PLP to pyridoxal (PL), the transportable form of vitamin B6, in order to provide a sufficient amount of PLP in the brain, an essential cofactor for enzymes catalyzing the synthesis of diverse neurotransmitters. Additionally, also able to mediate ATP degradation in a stepwise manner to adenosine, thereby regulating the availability of ligands for purinergic receptors. Also capable of dephosphorylating microbial products, such as lipopolysaccharides (LPS) as well as other phosphorylated small-molecules, such as poly-inosine:cytosine (poly I:C). Acts as a key regulator of adaptive thermogenesis as part of the futile creatine cycle: localizes to the mitochondria of thermogenic fat cells and acts by mediating hydrolysis of N-phosphocreatine to initiate a futile cycle of creatine dephosphorylation and phosphorylation. During the futile creatine cycle, creatine and N-phosphocreatine are in a futile cycle, which dissipates the high energy charge of N-phosphocreatine as heat without performing any mechanical or chemical work. This Felis catus (Cat) protein is Alkaline phosphatase, tissue-nonspecific isozyme (ALPL).